The chain runs to 327 residues: MPHLAELVAKAKAAVEGAQDIAALDLVRVEYLGKKGHLTLQMTSLRELPAEERPAAGAVINQAKQEVQEALNARKEKLESAVLNARLAAETIDVSLPGRRMENGGLHPVTRTIERIETFFGELGFSVESGPEIEDDYHNFDALNIPAHHPARADHDTFWFDATRLLRTQTSGVQIRTMQEQQPPIRIIVPGRVYRNDYDQTHTPMFHQMEGLIVDRDISFTNLKGTLHDFLRNFFEEDLQIRFRPSYFPFTEPSAEVDVMGKNGKWLEVLGCGMVHPNVLRNVGIDPEIYSGFAFGMGMERLTMLRYGVTDLRAFFENDLRFLKQFK.

Residue Glu-252 coordinates Mg(2+).

It belongs to the class-II aminoacyl-tRNA synthetase family. Phe-tRNA synthetase alpha subunit type 1 subfamily. In terms of assembly, tetramer of two alpha and two beta subunits. Requires Mg(2+) as cofactor.

The protein resides in the cytoplasm. The enzyme catalyses tRNA(Phe) + L-phenylalanine + ATP = L-phenylalanyl-tRNA(Phe) + AMP + diphosphate + H(+). This Yersinia pestis bv. Antiqua (strain Angola) protein is Phenylalanine--tRNA ligase alpha subunit.